Consider the following 1093-residue polypeptide: NACHT, LRR and PYD domains-containing protein 14 (1093 aa).

Residues 1 to 97 enclose the Pyrin domain; it reads MADSSSSSFF…CERAKEEINW (97 aa). Residues 102–121 form a disordered region; it reads IGPDDAKAGETQEDQEAVLG. Positions 177-499 constitute an NACHT domain; the sequence is QIVVLQGAAG…MFYMLKGSWE (323 aa). 183 to 190 provides a ligand contact to ATP; sequence GAAGVGKT. 11 LRR repeats span residues 730–750, 759–780, 787–807, 816–836, 844–864, 873–894, 901–921, 930–951, 958–978, 987–1008, and 1015–1035; these read NLMH…KSLC, KLQT…NISN, SLIF…QLLC, YLER…EYLS, RLTH…KLMS, TLKS…YLST, SLTH…KLLC, NLQD…DLAS, NLRS…KILC, NIQR…DLSS, and RLIK…VKLY.

It belongs to the NLRP family. As to expression, testis-specific.

The protein resides in the cytoplasm. May be involved in inflammation and spermatogenesis. In Homo sapiens (Human), this protein is NACHT, LRR and PYD domains-containing protein 14 (NLRP14).